Reading from the N-terminus, the 832-residue chain is Cytosolic carboxypeptidase-like protein 5 (832 aa).

The segment at 27 to 50 (TVPSDGEGVGGAATAPTSGSASSP) is disordered. Residues 38-50 (AATAPTSGSASSP) show a composition bias toward low complexity. The Peptidase M14 domain occupies 157-571 (YPFSYSDCQD…ALAIAALDMA (415 aa)). Zn(2+) is bound by residues His-252 and Glu-255. Residues 343–354 (NSKNPSNQQPSS) are compositionally biased toward low complexity. Disordered stretches follow at residues 343–362 (NSKN…PEVP) and 376–402 (LHLG…KTDP). Over residues 384 to 401 (GENHDRWTETEPTEEKTD) the composition is skewed to basic and acidic residues. His-435 provides a ligand contact to Zn(2+). Catalysis depends on Glu-517, which acts as the Proton donor/acceptor. The disordered stretch occupies residues 606 to 752 (STANVGLNKK…ASPTSSRNMG (147 aa)). Residues 621–636 (PPKSNNGLPVSCSENA) show a composition bias toward polar residues. Over residues 644–654 (STGTSTGGSSS) the composition is skewed to low complexity. Residues 655–666 (QQNSPQMKNSPS) are compositionally biased toward polar residues. Over residues 708–752 (QQQQQQQQQQQQQQQQPLNQRSTTSSLAPSPTLASASPTSSRNMG) the composition is skewed to low complexity.

Belongs to the peptidase M14 family. The cofactor is Zn(2+).

The protein resides in the cytoplasm. Its subcellular location is the cytosol. The protein localises to the nucleus. It localises to the cytoskeleton. It is found in the spindle. The protein resides in the midbody. The enzyme catalyses gamma-L-glutamyl-L-glutamyl-[protein] + H2O = L-glutamyl-[protein] + L-glutamate. It carries out the reaction (L-glutamyl)(n+1)-gamma-L-glutamyl-L-glutamyl-[protein] + H2O = (L-glutamyl)(n)-gamma-L-glutamyl-L-glutamyl-[protein] + L-glutamate. It catalyses the reaction C-terminal L-alpha-aminoacyl-L-glutamyl-[tubulin] + H2O = C-terminal L-alpha-aminoacyl-[tubulin] + L-glutamate. The catalysed reaction is C-terminal L-alpha-aminoacyl-L-glutamyl-L-glutamyl-[tubulin] + H2O = C-terminal L-alpha-aminoacyl-L-glutamyl-[tubulin] + L-glutamate. Metallocarboxypeptidase that mediates deglutamylation of tubulin and non-tubulin target proteins. Catalyzes the removal of polyglutamate side chains present on the gamma-carboxyl group of glutamate residues within the C-terminal tail of alpha- and beta-tubulin. Cleaves alpha- and gamma-linked polyglutamate tubulin side-chain, as well as the branching point glutamate. Also catalyzes the removal of alpha-linked glutamate residues from the carboxy-terminus of alpha-tubulin. Mediates deglutamylation of nucleotidyltransferase CGAS, leading to CGAS antiviral defense response activation. This chain is Cytosolic carboxypeptidase-like protein 5 (Agbl5), found in Rattus norvegicus (Rat).